The sequence spans 166 residues: Endoribonuclease YbeY (166 aa).

Zn(2+) is bound by residues H132, H136, and H142.

The protein belongs to the endoribonuclease YbeY family. Zn(2+) serves as cofactor.

The protein resides in the cytoplasm. In terms of biological role, single strand-specific metallo-endoribonuclease involved in late-stage 70S ribosome quality control and in maturation of the 3' terminus of the 16S rRNA. The sequence is that of Endoribonuclease YbeY from Clostridium botulinum (strain Alaska E43 / Type E3).